The chain runs to 336 residues: Zinc transporter ZIP11 (336 aa).

A run of 7 helical transmembrane segments spans residues 12-32, 44-64, 75-95, 188-208, 258-278, 280-300, and 316-336; these read LLGTLLTWGLTAAGSALVFIF, LGFAAGVMLAASYWSLLAPAI, SFAFVPAAVGFLVGAGFVYLA, IMLLILAITIHNIPEGLAVGV, WYGQLSGMVEPIAGLLGTIAI, LAEPLLPYALAFAAGAMVYVV, and LASWTCIFGFIVMMSLDVGLG.

The protein belongs to the ZIP transporter (TC 2.A.5) family.

It localises to the cell membrane. Its subcellular location is the nucleus. The protein resides in the cytoplasm. It is found in the golgi apparatus. Functionally, functions as a cellular zinc transporter. This is Zinc transporter ZIP11 (slc39a11) from Xenopus tropicalis (Western clawed frog).